The chain runs to 205 residues: CASP-like protein 2A1 (205 aa).

Positions 1 to 25 are disordered; sequence MDKSKVSTAVGGETPVGLITGSRDD. Residues 1–34 are Cytoplasmic-facing; the sequence is MDKSKVSTAVGGETPVGLITGSRDDELESGSMRT. Residues 35-55 traverse the membrane as a helical segment; sequence AETVLRLVPMAFCISALVLML. The Extracellular segment spans residues 56 to 76; that stretch reads KNSQTNDFGTLSYSDLGAFRY. Residues 77–97 form a helical membrane-spanning segment; it reads LVHANGICAGYSLLSAIIVAM. Over 98 to 105 the chain is Cytoplasmic; that stretch reads PRPSTMSR. The chain crosses the membrane as a helical span at residues 106-126; the sequence is AWTFFFLDQVLTYVILAAAAV. Topologically, residues 127–156 are extracellular; the sequence is SVEALYLARKGDIAITWSAACVSFGGFCHK. The helical transmembrane segment at 157 to 177 threads the bilayer; it reads AITSAVITFIVVVCYALLSLV. At 178–205 the chain is on the cytoplasmic side; that stretch reads SSYKLFSRYGAPDVSYPGKGIEVAAFHS.

This sequence belongs to the Casparian strip membrane proteins (CASP) family. Homodimer and heterodimers.

The protein resides in the cell membrane. The protein is CASP-like protein 2A1 of Ricinus communis (Castor bean).